A 488-amino-acid polypeptide reads, in one-letter code: Ribulose bisphosphate carboxylase large chain 1 (488 aa).

Residues asparagine 127 and threonine 177 each coordinate substrate. Lysine 179 acts as the Proton acceptor in catalysis. Lysine 181 contacts substrate. Residues lysine 205, aspartate 207, and glutamate 208 each coordinate Mg(2+). The residue at position 205 (lysine 205) is an N6-carboxylysine. Histidine 297 functions as the Proton acceptor in the catalytic mechanism. 3 residues coordinate substrate: arginine 298, histidine 330, and serine 382.

The protein belongs to the RuBisCO large chain family. Type I subfamily. As to quaternary structure, heterohexadecamer of 8 large chains and 8 small chains. Requires Mg(2+) as cofactor.

It catalyses the reaction 2 (2R)-3-phosphoglycerate + 2 H(+) = D-ribulose 1,5-bisphosphate + CO2 + H2O. The enzyme catalyses D-ribulose 1,5-bisphosphate + O2 = 2-phosphoglycolate + (2R)-3-phosphoglycerate + 2 H(+). Functionally, ruBisCO catalyzes two reactions: the carboxylation of D-ribulose 1,5-bisphosphate, the primary event in carbon dioxide fixation, as well as the oxidative fragmentation of the pentose substrate. Both reactions occur simultaneously and in competition at the same active site. The polypeptide is Ribulose bisphosphate carboxylase large chain 1 (Bradyrhizobium sp. (strain BTAi1 / ATCC BAA-1182)).